Here is a 2240-residue protein sequence, read N- to C-terminus: Cadherin-89D (2240 aa).

Cadherin domains follow at residues 70-179 (SEGV…APEF), 180-295 (LNVP…PPKF), 296-411 (TEGV…VPEF), 412-528 (EADY…TPKF), and 529-643 (EHGN…APYE). 19 N-linked (GlcNAc...) asparagine glycosylation sites follow: asparagine 114, asparagine 119, asparagine 191, asparagine 278, asparagine 334, asparagine 417, asparagine 585, asparagine 720, asparagine 752, asparagine 822, asparagine 833, asparagine 983, asparagine 989, asparagine 1006, asparagine 1255, asparagine 1318, asparagine 1486, asparagine 1529, and asparagine 1556. The segment at 814-844 (MPSEPTSRNITMGSRFRSRNRSRSSKSKRRL) is disordered. Cadherin domains are found at residues 824–927 (TMGS…APKF), 928–1087 (NALT…APMF), 1171–1284 (TTKC…APTF), 1285–1389 (KKSW…RPEF), and 1411–1520 (MLPV…PPKS). A compositionally biased stretch (basic residues) spans 829-844 (FRSRNRSRSSKSKRRL). Cadherin domains follow at residues 1534–1660 (QHAY…APKF) and 1661–1774 (RGNG…MPVE). Residues 1884–1904 (FVTVVLLALISLGALIAACCY) traverse the membrane as a helical segment. The Cytoplasmic portion of the chain corresponds to 1905 to 2240 (VCMRQKRRLW…LEFSKSNSLF (336 aa)). Disordered regions lie at residues 1930–1972 (IAGI…PESV) and 2121–2140 (AHLELRQPNTDSSDTYEDSL). Positions 1939-1952 (QKQRRQRQQRHTQR) are enriched in basic residues. The span at 1953–1964 (CSKGSTGSQRPT) shows a compositional bias: polar residues.

It localises to the cell membrane. Its function is as follows. Cadherins are calcium-dependent cell adhesion proteins. They preferentially interact with themselves in a homophilic manner in connecting cells. In Drosophila melanogaster (Fruit fly), this protein is Cadherin-89D (Cad89D).